The chain runs to 639 residues: Extracellular metalloproteinase 1 (639 aa).

An N-terminal signal peptide occupies residues 1-19 (MHGLLLAAGLISLPLHVLA). Positions 20 to 250 (HPQPSSTSLA…VHNVVDYVAH (231 aa)) are excised as a propeptide. N-linked (GlcNAc...) asparagine glycosylation occurs at asparagine 291. Zn(2+) is bound at residue histidine 434. Glutamate 435 is an active-site residue. Position 438 (histidine 438) interacts with Zn(2+). Asparagine 598 carries N-linked (GlcNAc...) asparagine glycosylation.

Belongs to the peptidase M36 family. It depends on Zn(2+) as a cofactor.

It is found in the secreted. Secreted metalloproteinase probably acting as a virulence factor. This Arthroderma otae (strain ATCC MYA-4605 / CBS 113480) (Microsporum canis) protein is Extracellular metalloproteinase 1 (MEP1).